A 150-amino-acid polypeptide reads, in one-letter code: Large ribosomal subunit protein bL9 (150 aa).

The protein belongs to the bacterial ribosomal protein bL9 family.

In terms of biological role, binds to the 23S rRNA. The protein is Large ribosomal subunit protein bL9 of Moorella thermoacetica (strain ATCC 39073 / JCM 9320).